The sequence spans 167 residues: MTTRSQDQTRDLKVLGTGRLTSPEGGPSVALLEAFPNCFPQRPYVISISFPEFTSLCPVTGQPDCGTITVEYIPDELCVESKSFKLYMFAFRNHQSFMETITNNVLEDLRALLNPCWCRVKGLFAPRGGTRIHVFAEAFKDGMPEEQSALVRETVRSWKSEPDPHRP.

A disordered region spans residues methionine 1 to glutamate 24. Catalysis depends on cysteine 57, which acts as the Thioimide intermediate. The Proton donor role is filled by aspartate 64. Substrate is bound by residues valine 79–serine 81 and methionine 98–glutamate 99.

It belongs to the GTP cyclohydrolase I family. QueF type 1 subfamily.

Its subcellular location is the cytoplasm. It carries out the reaction 7-aminomethyl-7-carbaguanine + 2 NADP(+) = 7-cyano-7-deazaguanine + 2 NADPH + 3 H(+). The protein operates within tRNA modification; tRNA-queuosine biosynthesis. Its function is as follows. Catalyzes the NADPH-dependent reduction of 7-cyano-7-deazaguanine (preQ0) to 7-aminomethyl-7-deazaguanine (preQ1). This Desulfovibrio desulfuricans (strain ATCC 27774 / DSM 6949 / MB) protein is NADPH-dependent 7-cyano-7-deazaguanine reductase.